Here is a 700-residue protein sequence, read N- to C-terminus: MSRRTRCEDLDELHYQDTDSDVPEQRDSKCKVKWTHEEDEQLRALVRQFGQQDWKFLASHFPNRTDQQCQYRWLRVLNPDLVKGPWTKEEDQKVIELVKKYGTKQWTLIAKHLKGRLGKQCRERWHNHLNPEVKKSCWTEEEDRIICEAHKVLGNRWAEIAKMLPGRTDNAVKNHWNSTIKRKVDTGGFLSESKDCKPPVYLLLELEDKDGLQSAQPTEGQGSLLTNWPSVPPTIKEEENSEEELAAATTSKEQEPIGTDLDAVRTPEPLEEFPKREDQEGSPPETSLPYKWVVEAANLLIPAVGSSLSEALDLIESDPDAWCDLSKFDLPEEPSAEDSINNSLVQLQASHQQQVLPPRQPSALVPSVTEYRLDGHTISDLSRSSRGELIPISPSTEVGGSGIGTPPSVLKRQRKRRVALSPVTENSTSLSFLDSCNSLTPKSTPVKTLPFSPSQFLNFWNKQDTLELESPSLTSTPVCSQKVVVTTPLHRDKTPLHQKHAAFVTPDQKYSMDNTPHTPTPFKNALEKYGPLKPLPQTPHLEEDLKEVLRSEAGIELIIEDDIRPEKQKRKPGLRRSPIKKVRKSLALDIVDEDVKLMMSTLPKSLSLPTTAPSNSSSLTLSGIKEDNSLLNQGFLQAKPEKAAVAQKPRSHFTTPAPMSSAWKTVACGGTRDQLFMQEKARQLLGRLKPSHTSRTLILS.

3 HTH myb-type domains span residues 26-77 (RDSK…LRVL), 78-133 (NPDL…NPEV), and 134-184 (KKSC…KRKV). Residues 54 to 77 (WKFLASHFPNRTDQQCQYRWLRVL) constitute a DNA-binding region (H-T-H motif). Lysine 104 participates in a covalent cross-link: Glycyl lysine isopeptide (Lys-Gly) (interchain with G-Cter in SUMO2). DNA-binding regions (H-T-H motif) lie at residues 106–129 (WTLI…HNHL) and 157–180 (WAEI…NSTI). Residues lysine 194 and lysine 197 each participate in a glycyl lysine isopeptide (Lys-Gly) (interchain with G-Cter in SUMO2) cross-link. Disordered stretches follow at residues 212 to 287 (LQSA…PETS) and 391 to 412 (PISP…VLKR). Residues 213-229 (QSAQPTEGQGSLLTNWP) show a composition bias toward polar residues. The residue at position 241 (serine 241) is a Phosphoserine. Threonine 266 is modified (phosphothreonine). Lysine 275 is covalently cross-linked (Glycyl lysine isopeptide (Lys-Gly) (interchain with G-Cter in SUMO2)). A phosphoserine mark is found at serine 282 and serine 393. A Glycyl lysine isopeptide (Lys-Gly) (interchain with G-Cter in SUMO2) cross-link involves residue lysine 411. Positions 411 to 417 (KRQRKRR) match the Nuclear localization signal motif. A phosphothreonine; by CDK2 mark is found at threonine 440 and threonine 444. Residues lysine 447 and lysine 482 each participate in a glycyl lysine isopeptide (Lys-Gly) (interchain with G-Cter in SUMO2) cross-link. 2 positions are modified to phosphothreonine; by CDK2: threonine 487 and threonine 494. Lysine 499 participates in a covalent cross-link: Glycyl lysine isopeptide (Lys-Gly) (interchain with G-Cter in SUMO2). Threonine 505 carries the post-translational modification Phosphothreonine. Residue lysine 509 forms a Glycyl lysine isopeptide (Lys-Gly) (interchain with G-Cter in SUMO2) linkage. Threonine 520 is subject to Phosphothreonine; by CDK2. Residues lysine 523, lysine 533, and lysine 546 each participate in a glycyl lysine isopeptide (Lys-Gly) (interchain with G-Cter in SUMO2) cross-link. The Bipartite nuclear localization signal signature appears at 564–584 (RPEKQKRKPGLRRSPIKKVRK). Serine 577 is subject to Phosphoserine; by CDK2. Residues lysine 584, lysine 596, lysine 625, lysine 639, and lysine 648 each participate in a glycyl lysine isopeptide (Lys-Gly) (interchain with G-Cter in SUMO2) cross-link.

In terms of assembly, component of the DREAM complex (also named LINC complex) at least composed of E2F4, E2F5, LIN9, LIN37, LIN52, LIN54, MYBL1, MYBL2, RBL1, RBL2, RBBP4, TFDP1 and TFDP2. The complex exists in quiescent cells where it represses cell cycle-dependent genes. It dissociates in S phase when LIN9, LIN37, LIN52 and LIN54 form a subcomplex that binds to MYBL22. Interacts with CCNF (via the Cyclin N-terminal domain). In terms of processing, phosphorylated by cyclin A/CDK2 during S-phase. Phosphorylation at Thr-520 is probably involved in transcriptional activity.

It localises to the nucleus. Its function is as follows. Transcription factor involved in the regulation of cell survival, proliferation, and differentiation. Transactivates the expression of the CLU gene. This Homo sapiens (Human) protein is Myb-related protein B (MYBL2).